Consider the following 4235-residue polypeptide: Tenellin synthetase (4235 aa).

One can recognise a Ketosynthase family 3 (KS3) domain in the interval 15–455; it reads SEPIAIVGSA…GTNAHAIIER (441 aa). Residues cysteine 189, histidine 326, and histidine 375 each act as for beta-ketoacyl synthase activity in the active site. The malonyl-CoA:ACP transacylase (MAT) domain stretch occupies residues 590-924; the sequence is IFTGQGAQWP…ANDAVAFSTA (335 aa). The segment at 993–1135 is N-terminal hotdog fold; that stretch reads HELLGRRMPD…GRIAVHLGAK (143 aa). The dehydratase (DH) domain stretch occupies residues 993 to 1310; that stretch reads HELLGRRMPD…GFEVRAVGEP (318 aa). A PKS/mFAS DH domain is found at 993–1313; it reads HELLGRRMPD…VRAVGEPDAS (321 aa). Histidine 1025 functions as the Proton acceptor; for dehydratase activity in the catalytic mechanism. Residues 1158 to 1313 form a C-terminal hotdog fold region; the sequence is LQQLDCEKLY…VRAVGEPDAS (156 aa). Residue aspartate 1217 is the Proton donor; for dehydratase activity of the active site. The segment at 1459–1652 is methyltransferase (MT) domain; sequence RLYTEDKGMH…FSGVDHIVHD (194 aa). The tract at residues 2208–2381 is ketoreductase (KR) domain; it reads TYLMVGAAGG…AASIIHVGHV (174 aa). The Carrier 1 domain occupies 2500–2580; that stretch reads EAAAAALKGF…QLSALAAKLA (81 aa). Serine 2540 is modified (O-(pantetheine 4'-phosphoryl)serine). The tract at residues 2587-2709 is disordered; the sequence is RAQLEEASGN…EISSNGFFTQ (123 aa). Residues 2605 to 2619 show a composition bias toward basic and acidic residues; it reads NDKETGPSKKGKAQE. Polar residues-rich tracts occupy residues 2645 to 2659 and 2666 to 2678; these read GGSSTANFTTSSSVS and QESTLQSSENNGE. Residues 2679–2695 show a composition bias toward low complexity; it reads STPSKSSNCNSDSGSDN. Residues 2720–3163 are condensation (C) domain; the sequence is REAPMSPAQS…TAQSVGDCVV (444 aa). Positions 3197-3609 are adenylation (A) (KR) domain; sequence CQQHSTKSAI…DGTLLCFGRI (413 aa). The tract at residues 3724–3750 is disordered; sequence DEAAAATSPSNDNNNNNTPSGGGGEKM. A compositionally biased stretch (low complexity) spans 3726–3742; sequence AAAATSPSNDNNNNNTP. Residues 3748-3833 form the Carrier 2 domain; the sequence is EKMTVRQGEL…GMARCVAEQR (86 aa). Position 3793 is an O-(pantetheine 4'-phosphoryl)serine (serine 3793). A disordered region spans residues 3860–3889; that stretch reads EKLQHSSASSSSSSSSSSAGSSSTQRPRKT. A compositionally biased stretch (low complexity) spans 3865-3882; sequence SSASSSSSSSSSSAGSSS. A reductase (RED) domain region spans residues 3896-4141; it reads LTGATGFLGG…LDFGQVDKVV (246 aa).

This sequence in the C-terminal section; belongs to the NRP synthetase family.

Its pathway is secondary metabolite biosynthesis. Its function is as follows. Hybrid PKS-NRPS synthetase; part of the gene cluster that mediates the biosynthesis of tenellin-type 2-pyridones, iron-chelating compounds involved in iron stress tolerance, competition with the natural competitor fungus Metarhizium robertsii and insect hosts infection. TenS catalyzes the assembly of the polyketide-amino acid backbone. Because tenS lacks a designated enoylreductase (ER) domain, the required activity is provided the enoyl reductase tenC. Upon formation of the polyketide backbone on the thiotemplate, the triketide is transferred to the NRPS module and linked to tyrosine to produce the pyrrolidine-2-dione intermediates, including pretellinin A, 11-hydropretellenin A, 12-hydropretellenin A, 13-hydropretellenin A, 14-hydropretellenin A, 12-oxopretellenin A and prototellinin D. The pathway begins with the assembly of the polyketide-amino acid backbone by the hybrid PKS-NRPS tenS with the help of the enoyl reductase tenC. These enzymes catalyze the synthesis of the pyrrolidine-2-dione intermediates pretellinin A, 11-hydropretellenin A, 12-hydropretellenin A, 13-hydropretellenin A, 14-hydropretellenin A, 12-oxopretellenin A and prototellinin D. The cytochrome P450 monooxygenase tenA then catalyzes an oxidative ring expansion of pretenellin A and 14-hydropretellenin A to form the 2-pyridone core, leading to pretenellin B and pyridovericin, respectively. The cytochrome P450 monooxygenase tenB is then required for the selective N-hydroxylation of the 2-pyridone nitrogen of yield tellinin and 15-hydroxytellenin (15-HT), respectively. The UDP-glucosyltransferase GT1 and the methyltransferase MT1, located outside the tenS gene cluster, contribute to the stepwise glycosylation and methylation of 15-HT to obtain the glycoside pyridovericin-N-O-(4-O-methyl-beta-D-glucopyranoside) (PMGP). Additional related compounds such as 1-O-methyl-15-HT, (8Z)-1-O-methyl-15-HT, and O-methyltenellin A are also produced but the enzymes involved in their biosynthesis have still to be determined. This is Tenellin synthetase from Beauveria bassiana (strain ARSEF 2860) (White muscardine disease fungus).